We begin with the raw amino-acid sequence, 401 residues long: Inactive (1R,4R,5S)-(-)-guaia-6,10(14)-diene synthase (401 aa).

The interval 1–20 (MVKFDSGSESEMTNGDELHI) is disordered. Mg(2+) is bound by residues D134 and E139. Residues 134–138 (DDQFD) carry the DDXXD motif motif. Residue R242 coordinates substrate. Residue S292 participates in Mg(2+) binding. K295 contacts substrate. D296 is a binding site for Mg(2+). 375 to 376 (RY) is a substrate binding site.

This sequence belongs to the terpene synthase family. The cofactor is Mg(2+).

The chain is Inactive (1R,4R,5S)-(-)-guaia-6,10(14)-diene synthase from Gibberella fujikuroi (strain CBS 195.34 / IMI 58289 / NRRL A-6831) (Bakanae and foot rot disease fungus).